A 946-amino-acid polypeptide reads, in one-letter code: Protein translocase subunit SecA (946 aa).

Residues Gln90, 108–112 (GEGKT), and Asp509 each bind ATP.

It belongs to the SecA family. In terms of assembly, monomer and homodimer. Part of the essential Sec protein translocation apparatus which comprises SecA, SecYEG and auxiliary proteins SecDF. Other proteins may also be involved.

The protein resides in the cell inner membrane. Its subcellular location is the cellular thylakoid membrane. The protein localises to the cytoplasm. It catalyses the reaction ATP + H2O + cellular proteinSide 1 = ADP + phosphate + cellular proteinSide 2.. Its function is as follows. Part of the Sec protein translocase complex. Interacts with the SecYEG preprotein conducting channel. Has a central role in coupling the hydrolysis of ATP to the transfer of proteins into and across the cell membrane, serving as an ATP-driven molecular motor driving the stepwise translocation of polypeptide chains across the membrane. In terms of biological role, probably participates in protein translocation into and across both the cytoplasmic and thylakoid membranes in cyanobacterial cells. The polypeptide is Protein translocase subunit SecA (Synechococcus sp. (strain RCC307)).